The sequence spans 122 residues: Large ribosomal subunit protein uL14 (122 aa).

The protein belongs to the universal ribosomal protein uL14 family. Part of the 50S ribosomal subunit. Forms a cluster with proteins L3 and L19. In the 70S ribosome, L14 and L19 interact and together make contacts with the 16S rRNA in bridges B5 and B8.

Binds to 23S rRNA. Forms part of two intersubunit bridges in the 70S ribosome. The sequence is that of Large ribosomal subunit protein uL14 from Methylococcus capsulatus (strain ATCC 33009 / NCIMB 11132 / Bath).